Consider the following 102-residue polypeptide: Putative pterin-4-alpha-carbinolamine dehydratase (102 aa).

Belongs to the pterin-4-alpha-carbinolamine dehydratase family.

The catalysed reaction is (4aS,6R)-4a-hydroxy-L-erythro-5,6,7,8-tetrahydrobiopterin = (6R)-L-erythro-6,7-dihydrobiopterin + H2O. This is Putative pterin-4-alpha-carbinolamine dehydratase from Burkholderia multivorans (strain ATCC 17616 / 249).